Reading from the N-terminus, the 423-residue chain is GTPase HflX (423 aa).

The 163-residue stretch at 201-363 (IQLALVGYTN…KIEQALKGMM (163 aa)) folds into the Hflx-type G domain. Residues 207–214 (GYTNAGKS), 232–236 (FATLD), 254–257 (DTVG), 320–323 (NKAD), and 341–343 (SAY) contribute to the GTP site. Residues serine 214 and threonine 234 each coordinate Mg(2+).

This sequence belongs to the TRAFAC class OBG-HflX-like GTPase superfamily. HflX GTPase family. In terms of assembly, monomer. Associates with the 50S ribosomal subunit. It depends on Mg(2+) as a cofactor.

The protein resides in the cytoplasm. Its function is as follows. GTPase that associates with the 50S ribosomal subunit and may have a role during protein synthesis or ribosome biogenesis. This Alkalihalophilus pseudofirmus (strain ATCC BAA-2126 / JCM 17055 / OF4) (Bacillus pseudofirmus) protein is GTPase HflX.